Here is a 217-residue protein sequence, read N- to C-terminus: Small ribosomal subunit protein uS3 (217 aa).

Residues 38–106 (IRQLIQTKLA…QVHINIVEIK (69 aa)) enclose the KH type-2 domain.

This sequence belongs to the universal ribosomal protein uS3 family. In terms of assembly, part of the 30S ribosomal subunit. Forms a tight complex with proteins S10 and S14.

Its function is as follows. Binds the lower part of the 30S subunit head. Binds mRNA in the 70S ribosome, positioning it for translation. In Lactococcus lactis subsp. lactis (strain IL1403) (Streptococcus lactis), this protein is Small ribosomal subunit protein uS3.